We begin with the raw amino-acid sequence, 291 residues long: Nitrogenase iron protein (291 aa).

ATP is bound at residue 11–18; sequence GKGGIGKS. A [4Fe-4S] cluster-binding site is contributed by C99. Position 102 is an ADP-ribosylarginine; by dinitrogenase reductase ADP-ribosyltransferase (R102). A [4Fe-4S] cluster-binding site is contributed by C133.

The protein belongs to the NifH/BchL/ChlL family. As to quaternary structure, homodimer. The cofactor is [4Fe-4S] cluster. Post-translationally, the reversible ADP-ribosylation of Arg-102 inactivates the nitrogenase reductase and regulates nitrogenase activity.

The enzyme catalyses N2 + 8 reduced [2Fe-2S]-[ferredoxin] + 16 ATP + 16 H2O = H2 + 8 oxidized [2Fe-2S]-[ferredoxin] + 2 NH4(+) + 16 ADP + 16 phosphate + 6 H(+). The key enzymatic reactions in nitrogen fixation are catalyzed by the nitrogenase complex, which has 2 components: the iron protein and the molybdenum-iron protein. The chain is Nitrogenase iron protein from Cereibacter sphaeroides (strain ATCC 17023 / DSM 158 / JCM 6121 / CCUG 31486 / LMG 2827 / NBRC 12203 / NCIMB 8253 / ATH 2.4.1.) (Rhodobacter sphaeroides).